A 525-amino-acid chain; its full sequence is GMP synthase [glutamine-hydrolyzing] (525 aa).

The 199-residue stretch at 9–207 (RILILDFGSQ…VRDICQCEAL (199 aa)) folds into the Glutamine amidotransferase type-1 domain. Cys86 functions as the Nucleophile in the catalytic mechanism. Active-site residues include His181 and Glu183. Residues 208-400 (WTPAKIIDDA…LGLPYDMLYR (193 aa)) enclose the GMPS ATP-PPase domain. 235–241 (SGGVDSS) contributes to the ATP binding site.

Homodimer.

It carries out the reaction XMP + L-glutamine + ATP + H2O = GMP + L-glutamate + AMP + diphosphate + 2 H(+). It functions in the pathway purine metabolism; GMP biosynthesis; GMP from XMP (L-Gln route): step 1/1. Catalyzes the synthesis of GMP from XMP. In Shigella flexneri, this protein is GMP synthase [glutamine-hydrolyzing].